Consider the following 238-residue polypeptide: ATP synthase subunit a (238 aa).

Helical transmembrane passes span 17-37 (LSNI…AIIC), 80-100 (ITLL…QIAI), 112-132 (DPIV…YYGI), and 194-214 (IFVG…SIFI).

It belongs to the ATPase A chain family. As to quaternary structure, F-type ATPases have 2 components, CF(1) - the catalytic core - and CF(0) - the membrane proton channel. CF(1) has five subunits: alpha(3), beta(3), gamma(1), delta(1), epsilon(1). CF(0) has three main subunits: a(1), b(2) and c(9-12). The alpha and beta chains form an alternating ring which encloses part of the gamma chain. CF(1) is attached to CF(0) by a central stalk formed by the gamma and epsilon chains, while a peripheral stalk is formed by the delta and b chains.

It localises to the cell membrane. Key component of the proton channel; it plays a direct role in the translocation of protons across the membrane. This chain is ATP synthase subunit a, found in Listeria innocua serovar 6a (strain ATCC BAA-680 / CLIP 11262).